Consider the following 443-residue polypeptide: KH domain-containing, RNA-binding, signal transduction-associated protein 1 (443 aa).

A disordered region spans residues 1–94; the sequence is MQRRDDPASR…PLLPPSATAA (94 aa). Phosphoserine occurs at positions 18 and 20. The residue at position 21 (Lys21) is an N6-acetyllysine. Ser29 carries the phosphoserine modification. Phosphothreonine is present on Thr33. Residues Arg45 and Arg52 each carry the asymmetric dimethylarginine; by PRMT1 modification. Ser58 carries the phosphoserine; by MAPK1 modification. The segment covering 61 to 72 has biased composition (pro residues); that stretch reads TQPPPLLPPSTP. Residues Thr71 and Thr84 each carry the phosphothreonine; by MAPK1 modification. The span at 81-94 shows a compositional bias: low complexity; that stretch reads SAPTPLLPPSATAA. Residues Lys96 and Lys102 each participate in a glycyl lysine isopeptide (Lys-Gly) (interchain with G-Cter in SUMO2) cross-link. The tract at residues 100–260 is involved in homodimerization; it reads ENKYLPELMA…VKKFLVPDMM (161 aa). A Phosphoserine modification is found at Ser113. A Glycyl lysine isopeptide (Lys-Gly) (interchain with G-Cter in SUMO2) cross-link involves residue Lys139. Position 150 is a phosphoserine (Ser150). The KH domain occupies 171–197; sequence NFVGKILGPQGNTIKRLQEETGAKISV. Lys175 carries the N6-acetyllysine; alternate modification. Lys175 participates in a covalent cross-link: Glycyl lysine isopeptide (Lys-Gly) (interchain with G-Cter in SUMO2); alternate. Thr183 carries the post-translational modification Phosphothreonine. Positions 280–317 are disordered; that stretch reads PSRGRGVSVRGRGAAPPPPPVPRGRGVGPPRGALVRGT. An omega-N-methylarginine mark is found at Arg282, Arg284, and Arg291. Positions 283–293 are enriched in low complexity; it reads GRGVSVRGRGA. An Asymmetric dimethylarginine modification is found at Arg304. A compositionally biased stretch (low complexity) spans 307–316; it reads GPPRGALVRG. An omega-N-methylarginine; by PRMT1 mark is found at Arg310 and Arg315. Arg320 carries the dimethylated arginine; alternate modification. At Arg320 the chain carries Omega-N-methylarginine; by PRMT1; alternate. The residue at position 325 (Arg325) is an Omega-N-methylarginine; by PRMT1. The tract at residues 326-345 is disordered; that stretch reads GATVTRGVPPPPTVRGAPTP. Arg331 and Arg340 each carry dimethylated arginine; alternate. An omega-N-methylarginine; by PRMT1; alternate mark is found at Arg331 and Arg340. Arg331 carries the post-translational modification Asymmetric dimethylarginine; alternate. Residues 351–443 form an interaction with HNRNPA1 region; the sequence is GIQRIPLPPT…AYREHPYGRY (93 aa). Tyr387 carries the post-translational modification Phosphotyrosine. Ser390 carries the phosphoserine modification. The tract at residues 400–420 is interaction with ZBTB7A; that stretch reads GHGELQDSYEAYGQDDWNGTR. Residues 411–443 are disordered; that stretch reads YGQDDWNGTRPSLKAPPARPVKGAYREHPYGRY. Lys432 participates in a covalent cross-link: Glycyl lysine isopeptide (Lys-Gly) (interchain with G-Cter in SUMO2). Residues 434-443 show a composition bias toward basic and acidic residues; that stretch reads AYREHPYGRY. Tyr435, Tyr440, and Tyr443 each carry phosphotyrosine; by PTK6.

It belongs to the KHDRBS family. In terms of assembly, self-associates to form homooligomers when bound to RNA, oligomerization appears to be limited when binding to proteins. Forms a trimeric complex in the nucleus consisting of BANP, HDAC6 and KHDRBS1/SAM68; HDAC6 keeps KHDRBS1 in a deacetylated state which inhibits the inclusion of CD44 alternate exons. The complex is disrupted by MAPK1/MAPK3-mediated phosphorylation of BANP which results in BANP export to the cytoplasm. This facilitates acetylation of KHDRBS1 and CD44 variant exon inclusion. Interacts with KHDRBS3/SLIM-2 and KHDRBS2/SLIM-1; heterooligomer formation of KHDRBS family proteins may modulate RNA substrate specificity. Interacts with RASA1, FYN, GRB2, PLCG1, SRC, CBP and PRMT1. Interacts with PTK6 (via SH3 and SH2 domains). Forms a complex with ILF2, ILF3, YLPM1, RBMX, NCOA5 and PPP1CA. Binds WBP4/FBP21 (via WW domains), FNBP4/FBP30 (via WW domains). Interacts (via Arg/Gly-rich-flanked Pro-rich regions) with FYN (via the SH3 domain). Interacts with APC, HNRNPA1. Interacts with the non-receptor tyrosine kinase SRMS; the interaction leads to phosphorylation of KHDRBS1. Interacts with ZBTB7A; negatively regulates KHDRBS1 splicing activity toward BCL2L1. Post-translationally, tyrosine phosphorylated by several non-receptor tyrosine kinases including LCK, FYN and JAK3. Also tyrosine phosphorylated by the non-receptor tyrosine kinase SRMS in an EGF-dependent manner. Phosphorylation by PTK6 negatively regulates its RNA binding ability. Phosphorylation by PTK6 at Tyr-440 dictates the nuclear localization of KHDRBS1. Phosphorylation by MAPK1 at Ser-58, Thr-71 and Thr-84 regulates CD44 alternative splicing by promoting CD44 exon v5 inclusion. Acetylated. Positively correlates with ability to bind RNA. Deacetylated by HDAC6; this regulates alternative splicing by inhibiting the inclusion of CD44 alternate exons. In terms of processing, arginine methylation is required for nuclear localization. Inhibits interaction with Src-like SH3 domains, but not interaction with WW domains of WBP4/FBP21 and FNBP4/FBP30. In terms of tissue distribution, in adult cerebellum expressed in most neuronal cell populations, specifically in cerebellar granule cells of the internal granular layer, ROR(alpha)-positive Purkinje cells, internal granular layer and molecular layer interneurons (at protein level).

The protein resides in the nucleus. It is found in the cytoplasm. The protein localises to the membrane. Recruited and tyrosine phosphorylated by several receptor systems, for example the T-cell, leptin and insulin receptors. Once phosphorylated, functions as an adapter protein in signal transduction cascades by binding to SH2 and SH3 domain-containing proteins. Role in G2-M progression in the cell cycle. Represses CBP-dependent transcriptional activation apparently by competing with other nuclear factors for binding to CBP. Also acts as a putative regulator of mRNA stability and/or translation rates and mediates mRNA nuclear export. Positively regulates the association of constitutive transport element (CTE)-containing mRNA with large polyribosomes and translation initiation. May not be involved in the nucleocytoplasmic export of unspliced (CTE)-containing RNA species. RNA-binding protein that plays a role in the regulation of alternative splicing and influences mRNA splice site selection and exon inclusion. Binds to RNA containing 5'-[AU]UAA-3' as a bipartite motif spaced by more than 15 nucleotides. Binds poly(A). In cooperation with HNRNPA1 modulates alternative splicing of BCL2L1 by promoting splicing toward isoform Bcl-X(S), and of SMN1. Can regulate CD44 alternative splicing in a Ras pathway-dependent manner. Can regulate alternative splicing of NRXN1 and NRXN3 in the laminin G-like domain 6 containing the evolutionary conserved neurexin alternative spliced segment 4 (AS4) involved in neurexin selective targeting to postsynaptic partners. In a neuronal activity-dependent manner cooperates synergistically with KHDRBS2/SLIM-1 in regulation of NRXN1 exon skipping at AS4. The cooperation with KHDRBS2/SLIM-1 is antagonistic for regulation of NXRN3 alternative splicing at AS4. The sequence is that of KH domain-containing, RNA-binding, signal transduction-associated protein 1 from Mus musculus (Mouse).